We begin with the raw amino-acid sequence, 219 residues long: Small ribosomal subunit protein uS3 (219 aa).

The KH type-2 domain maps to 38–106 (IRKYINTKLA…KVHINIVEIK (69 aa)).

Belongs to the universal ribosomal protein uS3 family. Part of the 30S ribosomal subunit. Forms a tight complex with proteins S10 and S14.

In terms of biological role, binds the lower part of the 30S subunit head. Binds mRNA in the 70S ribosome, positioning it for translation. This is Small ribosomal subunit protein uS3 from Latilactobacillus sakei subsp. sakei (strain 23K) (Lactobacillus sakei subsp. sakei).